The primary structure comprises 218 residues: Glutathione S-transferase Mu 7 (218 aa).

Residues 1–88 form the GST N-terminal domain; sequence MPMTLGYWDI…YLGRKHNLCG (88 aa). Glutathione-binding positions include 7 to 8, 46 to 50, 59 to 60, and 72 to 73; these read YW, WLNEK, NL, and QS. Residues 90–208 form the GST C-terminal domain; the sequence is TEEERIRVDI…KTSRFLPRPM (119 aa). Tyr-116 is a substrate binding site.

This sequence belongs to the GST superfamily. Mu family. As to quaternary structure, homodimer.

It localises to the cytoplasm. It carries out the reaction RX + glutathione = an S-substituted glutathione + a halide anion + H(+). Conjugation of reduced glutathione to a wide number of exogenous and endogenous hydrophobic electrophiles. The sequence is that of Glutathione S-transferase Mu 7 (Gstm7) from Mus musculus (Mouse).